The chain runs to 66 residues: Phylloseptin-S4 (66 aa).

The signal sequence occupies residues 1–22 (MAFLKKSLFLVLFLGLVSLSIC). A propeptide spanning residues 23–46 (EEEKRETEEEEHDQEEDDKSEEKR) is cleaved from the precursor. The interval 25–44 (EKRETEEEEHDQEEDDKSEE) is disordered. Acidic residues predominate over residues 30 to 41 (EEEEHDQEEDDK). Residue Leu65 is modified to Leucine amide.

As to expression, expressed by the skin glands.

The protein localises to the secreted. It localises to the target cell membrane. Its function is as follows. Antimicrobial peptide with high activity against Gram-positive bacteria, moderate activity against Gram-negative bacteria, and moderate activity against fungi. Acts by causing bacterial membrane disruption inducing leakage of the intracellular content followed by cell death. It adopts an alpha-helical amphipathic structure in membrane environments. Also shows highly potent antiparasitic activity against Leishmania species. Shows moderate hemolytic activity on human erythrocytes (LC(50)=33 uM). Is also active on human monocytes (IC(50)=23 uM). The polypeptide is Phylloseptin-S4 (Phyllomedusa sauvagei (Sauvage's leaf frog)).